A 78-amino-acid chain; its full sequence is Small ribosomal subunit protein bS18 (78 aa).

The protein belongs to the bacterial ribosomal protein bS18 family. As to quaternary structure, part of the 30S ribosomal subunit. Forms a tight heterodimer with protein bS6.

Its function is as follows. Binds as a heterodimer with protein bS6 to the central domain of the 16S rRNA, where it helps stabilize the platform of the 30S subunit. This chain is Small ribosomal subunit protein bS18, found in Levilactobacillus brevis (strain ATCC 367 / BCRC 12310 / CIP 105137 / JCM 1170 / LMG 11437 / NCIMB 947 / NCTC 947) (Lactobacillus brevis).